The following is a 98-amino-acid chain: Integration host factor subunit alpha (98 aa).

The segment covering Asp-53–Glu-69 has biased composition (basic and acidic residues). The interval Asp-53–Ile-73 is disordered.

It belongs to the bacterial histone-like protein family. In terms of assembly, heterodimer of an alpha and a beta chain.

Functionally, this protein is one of the two subunits of integration host factor, a specific DNA-binding protein that functions in genetic recombination as well as in transcriptional and translational control. The sequence is that of Integration host factor subunit alpha from Aliivibrio salmonicida (strain LFI1238) (Vibrio salmonicida (strain LFI1238)).